The following is a 354-amino-acid chain: MQPHLFTPLTIGSVTLRNRIGMSPMCQYSAVDGFPTDWHLMHLGARAAGGVGLIILEATAVSPEGRISPFDLGIWSDDHIAALSRIVKLIESLGAVAGIQLAHAGRKASVGRPWEGGKPIAPANGGWPVVGPTAEPFAPGYPTPIPLDAAGIARVVADFATATKRARAAGFRWIEIHAAHGYLLHNFLSPLGNDRNDEYGGDLRGRVRLLSEVTAAVRAEWPSDLPLAVRLSCSDWTPEGLTIADTVEVARMLREQGVDLIDCSSGGIAPGITIPVGEGYQVPFAAQVRREANIATAAVGLITRPEHADAIVRNGDADLVLLGRELLRDPHWPLRAARALGHDLAPPPQYLRAW.

Positions 23, 24, 26, 58, and 100 each coordinate FMN. The active-site Proton donor is Tyr182. Residues Arg230, Leu301, Gly323, and Arg324 each contribute to the FMN site.

The protein belongs to the NADH:flavin oxidoreductase/NADH oxidase family. NamA subfamily. Homodimer. Behaves as an active monomer in solution while in the crystal packing assembles following the classical dimeric architecture of other thermophilic-like ene-reductases. FMN is required as a cofactor.

The enzyme catalyses A + NADPH + H(+) = AH2 + NADP(+). Functionally, ene-reductase that catalyzes the stereoselective reduction of activated C-C double bonds. Shows very good activity with 4-ketoisophorone, 2-cyclohexen-1-one and 1-octen-3-one, and low activity with maleimide, 2-methyl-pentenal, 2-methyl-cyclohexen-1-one, 2-cyclopenten-1-one and trans-2-hexen-1-al. Shows the highest catalytic efficiency with ketoisophorone. Exhibits a restricted substrate spectrum with generally lower activities compared to other ene-reductases. This is NADPH dehydrogenase from Chloroflexus aggregans (strain MD-66 / DSM 9485).